Consider the following 133-residue polypeptide: Small ribosomal subunit protein uS9 (133 aa).

The protein belongs to the universal ribosomal protein uS9 family.

The protein is Small ribosomal subunit protein uS9 of Ureaplasma parvum serovar 3 (strain ATCC 700970).